The following is a 439-amino-acid chain: GTPase Der (439 aa).

EngA-type G domains lie at 3 to 167 and 176 to 351; these read PTVA…DKVG and IKVA…GNYT. GTP-binding positions include 9 to 16, 56 to 60, 119 to 122, 182 to 189, 229 to 233, and 294 to 297; these read GRPNVGKS, DTGGI, NKID, GKPNTGKS, DTAGL, and NKWD. The 85-residue stretch at 352–436 folds into the KH-like domain; the sequence is RRITTGQIND…PIVFLIREKG (85 aa).

It belongs to the TRAFAC class TrmE-Era-EngA-EngB-Septin-like GTPase superfamily. EngA (Der) GTPase family. Associates with the 50S ribosomal subunit.

Functionally, GTPase that plays an essential role in the late steps of ribosome biogenesis. In Caldicellulosiruptor saccharolyticus (strain ATCC 43494 / DSM 8903 / Tp8T 6331), this protein is GTPase Der.